The chain runs to 151 residues: Ribonuclease H (151 aa).

An RNase H type-1 domain is found at 2-143; sequence SSNVIEIYAD…ADALANKGVD (142 aa). Residues Asp-11, Glu-49, Asp-71, and Asp-135 each contribute to the Mg(2+) site.

This sequence belongs to the RNase H family. In terms of assembly, monomer. The cofactor is Mg(2+).

It localises to the cytoplasm. It carries out the reaction Endonucleolytic cleavage to 5'-phosphomonoester.. Endonuclease that specifically degrades the RNA of RNA-DNA hybrids. This Methylobacillus flagellatus (strain ATCC 51484 / DSM 6875 / VKM B-1610 / KT) protein is Ribonuclease H.